Consider the following 179-residue polypeptide: Large ribosomal subunit protein uL5 (179 aa).

The protein belongs to the universal ribosomal protein uL5 family. As to quaternary structure, part of the 50S ribosomal subunit; part of the 5S rRNA/L5/L18/L25 subcomplex. Contacts the 5S rRNA and the P site tRNA. Forms a bridge to the 30S subunit in the 70S ribosome.

This is one of the proteins that bind and probably mediate the attachment of the 5S RNA into the large ribosomal subunit, where it forms part of the central protuberance. In the 70S ribosome it contacts protein S13 of the 30S subunit (bridge B1b), connecting the 2 subunits; this bridge is implicated in subunit movement. Contacts the P site tRNA; the 5S rRNA and some of its associated proteins might help stabilize positioning of ribosome-bound tRNAs. The sequence is that of Large ribosomal subunit protein uL5 from Halorhodospira halophila (strain DSM 244 / SL1) (Ectothiorhodospira halophila (strain DSM 244 / SL1)).